The primary structure comprises 564 residues: Formate--tetrahydrofolate ligase (564 aa).

65–72 serves as a coordination point for ATP; the sequence is TPLGEGKT.

This sequence belongs to the formate--tetrahydrofolate ligase family.

It catalyses the reaction (6S)-5,6,7,8-tetrahydrofolate + formate + ATP = (6R)-10-formyltetrahydrofolate + ADP + phosphate. The protein operates within one-carbon metabolism; tetrahydrofolate interconversion. This Roseiflexus castenholzii (strain DSM 13941 / HLO8) protein is Formate--tetrahydrofolate ligase.